Consider the following 259-residue polypeptide: Proteasome subunit alpha (259 aa).

Positions 222 to 259 are disordered; sequence RITGPALEQLIPAEPAPASEPAPESKPDTETKPADPQD. Residues 244 to 259 are compositionally biased toward basic and acidic residues; sequence PESKPDTETKPADPQD.

It belongs to the peptidase T1A family. The 20S proteasome core is composed of 14 alpha and 14 beta subunits that assemble into four stacked heptameric rings, resulting in a barrel-shaped structure. The two inner rings, each composed of seven catalytic beta subunits, are sandwiched by two outer rings, each composed of seven alpha subunits. The catalytic chamber with the active sites is on the inside of the barrel. Has a gated structure, the ends of the cylinder being occluded by the N-termini of the alpha-subunits. Is capped by the proteasome-associated ATPase, ARC.

The protein resides in the cytoplasm. It participates in protein degradation; proteasomal Pup-dependent pathway. The formation of the proteasomal ATPase ARC-20S proteasome complex, likely via the docking of the C-termini of ARC into the intersubunit pockets in the alpha-rings, may trigger opening of the gate for substrate entry. Interconversion between the open-gate and close-gate conformations leads to a dynamic regulation of the 20S proteasome proteolysis activity. Functionally, component of the proteasome core, a large protease complex with broad specificity involved in protein degradation. In Rhodococcus jostii (strain RHA1), this protein is Proteasome subunit alpha.